A 699-amino-acid polypeptide reads, in one-letter code: Serine/threonine-protein kinase PRR2 (699 aa).

The tract at residues 168–193 (SSTKKNLANDISDNKHNNNSSNTIGH) is disordered. Over residues 184 to 193 (NNNSSNTIGH) the composition is skewed to polar residues. The 293-residue stretch at 361 to 653 (RDLDVVLGEG…INGILQDGWI (293 aa)) folds into the Protein kinase domain. Residues 367–375 (LGEGSGGKV) and K390 each bind ATP. The active-site Proton acceptor is D484.

It belongs to the protein kinase superfamily. Ser/Thr protein kinase family.

The catalysed reaction is L-seryl-[protein] + ATP = O-phospho-L-seryl-[protein] + ADP + H(+). The enzyme catalyses L-threonyl-[protein] + ATP = O-phospho-L-threonyl-[protein] + ADP + H(+). Protein kinase that functions as a regulator in the pheromone-induced mating pathway downstream of mitogen-activated protein kinase (MAPK) FUS3. Diminishes transcriptional induction of genes in response to pheromone signaling. In Saccharomyces cerevisiae (strain ATCC 204508 / S288c) (Baker's yeast), this protein is Serine/threonine-protein kinase PRR2 (PRR2).